Here is a 284-residue protein sequence, read N- to C-terminus: Gap junction beta-1 protein (284 aa).

Residues 1 to 22 (MNWTGLYTLLSGVNRHSTAIGR) are Cytoplasmic-facing. The chain crosses the membrane as a helical span at residues 23–45 (VWLSVIFIFRIMVLVVAAESVWG). Residues 46–75 (DEKSSFICNTLQPGCNSVCYDHFFPISHVR) are Extracellular-facing. Residues 76–95 (LWSLQLILVSTPALLVAMHV) traverse the membrane as a helical segment. Residues 96 to 130 (AHQQHIEKKMLRLEGHGDPLHLEEVKRHKVHISGT) are Cytoplasmic-facing. The helical transmembrane segment at 131-153 (LWWTYVISVVFRLLFEAAFMYVF) threads the bilayer. The Extracellular portion of the chain corresponds to 154–191 (YLLYPGYAMVRLVKCDAYPCPNTVDCFVSRPTEKTIFT). The helical transmembrane segment at 192 to 214 (VFMLAASGICIILNVAEVVYLIF) threads the bilayer. At 215-284 (RACARRAQRR…AEKSDRCSAC (70 aa)) the chain is on the cytoplasmic side. 4 positions are modified to phosphoserine: Ser233, Ser259, Ser267, and Ser278.

Belongs to the connexin family. Beta-type (group I) subfamily. In terms of assembly, a connexon is composed of a hexamer of connexins. Interacts with CNST.

It localises to the cell membrane. Its subcellular location is the cell junction. The protein localises to the gap junction. In terms of biological role, one gap junction consists of a cluster of closely packed pairs of transmembrane channels, the connexons, through which materials of low MW diffuse from one cell to a neighboring cell. The chain is Gap junction beta-1 protein (GJB1) from Bos taurus (Bovine).